Reading from the N-terminus, the 153-residue chain is Transcription antitermination protein NusB (153 aa).

This sequence belongs to the NusB family.

Involved in transcription antitermination. Required for transcription of ribosomal RNA (rRNA) genes. Binds specifically to the boxA antiterminator sequence of the ribosomal RNA (rrn) operons. The protein is Transcription antitermination protein NusB of Fusobacterium nucleatum subsp. nucleatum (strain ATCC 25586 / DSM 15643 / BCRC 10681 / CIP 101130 / JCM 8532 / KCTC 2640 / LMG 13131 / VPI 4355).